A 425-amino-acid polypeptide reads, in one-letter code: CinA-like protein (425 aa).

This sequence belongs to the CinA family.

The polypeptide is CinA-like protein (Shewanella sp. (strain ANA-3)).